A 186-amino-acid chain; its full sequence is Ribosome-recycling factor (186 aa).

This sequence belongs to the RRF family.

It localises to the cytoplasm. Responsible for the release of ribosomes from messenger RNA at the termination of protein biosynthesis. May increase the efficiency of translation by recycling ribosomes from one round of translation to another. This is Ribosome-recycling factor from Herminiimonas arsenicoxydans.